A 464-amino-acid polypeptide reads, in one-letter code: 3-isopropylmalate dehydratase large subunit (464 aa).

3 residues coordinate [4Fe-4S] cluster: Cys-345, Cys-405, and Cys-408.

The protein belongs to the aconitase/IPM isomerase family. LeuC type 1 subfamily. As to quaternary structure, heterodimer of LeuC and LeuD. [4Fe-4S] cluster is required as a cofactor.

It catalyses the reaction (2R,3S)-3-isopropylmalate = (2S)-2-isopropylmalate. The protein operates within amino-acid biosynthesis; L-leucine biosynthesis; L-leucine from 3-methyl-2-oxobutanoate: step 2/4. Functionally, catalyzes the isomerization between 2-isopropylmalate and 3-isopropylmalate, via the formation of 2-isopropylmaleate. The polypeptide is 3-isopropylmalate dehydratase large subunit (Bacteroides fragilis (strain ATCC 25285 / DSM 2151 / CCUG 4856 / JCM 11019 / LMG 10263 / NCTC 9343 / Onslow / VPI 2553 / EN-2)).